The sequence spans 113 residues: Protein CTLA-2-beta (113 aa).

2 consecutive repeat copies span residues 15-17 and 18-20. The tract at residues 15-20 is 2 X 3 AA tandem repeats of E-W-K; sequence EWKEWK.

To the propeptide regions of cysteine proteases.

Functionally, not known, expressed in activated T-cell. This is Protein CTLA-2-beta (Ctla2b) from Mus musculus (Mouse).